The sequence spans 400 residues: AA13 family lytic polysaccharide monooxygenase A (400 aa).

The first 17 residues, 1-17 (MLLTVLAVVGCFTAVNG), serve as a signal peptide directing secretion. Cu(2+) is bound at residue His18. His18 bears the Methylhistidine mark. Residues 18–247 (HGYLTIPASR…AQVYLHCADI (230 aa)) enclose the Chitin-binding type-4 domain. Disulfide bonds link Cys39/Cys42, Cys65/Cys244, Cys101/Cys202, Cys117/Cys144, Cys152/Cys160, Cys166/Cys172, and Cys180/Cys191. His108 contacts Cu(2+). An N-linked (GlcNAc...) asparagine glycan is attached at Asn119. Tyr241 is a binding site for Cu(2+). A disordered region spans residues 254–287 (GGTTSKSTTSTTSTTSTSRSTSTSAPTTTSSAST). Residues 257–287 (TSKSTTSTTSTTSTSRSTSTSAPTTTSSAST) are compositionally biased toward low complexity. The CBM20 domain occupies 293 to 400 (TTQASLIPVT…TTATAAASWR (108 aa)). Asn379 carries N-linked (GlcNAc...) asparagine glycosylation.

Belongs to the polysaccharide monooxygenase AA13 family. The cofactor is Cu(2+). O-mannosylated.

It is found in the secreted. The enzyme catalyses starch + reduced acceptor + O2 = D-glucono-1,5-lactone-terminated malto-oligosaccharides + short-chain malto-oligosaccharides + acceptor + H2O.. Its activity is regulated as follows. Activity is inhibited by both beta-cyclodextrin or amylose that block the access to the active site. Its function is as follows. Starch-active lytic polysaccharide monooxygenase that oxidizes the C1 position of starch substrates. Catalysis by LPMOs requires the reduction of the active-site copper from Cu(II) to Cu(I) by a reducing agent and H(2)O(2) or O(2) as a cosubstrate. The polypeptide is AA13 family lytic polysaccharide monooxygenase A (Aspergillus terreus (strain NIH 2624 / FGSC A1156)).